Reading from the N-terminus, the 143-residue chain is Large ribosomal subunit protein uL15 (143 aa).

A disordered region spans residues 1 to 57; the sequence is MQLNNLKPAAGSKHAKRRVGRGIGSGLGKTAGRGHKGQKSRSGGFHKVGFEGGQMPL. Positions 21-31 are enriched in gly residues; sequence RGIGSGLGKTA.

The protein belongs to the universal ribosomal protein uL15 family. In terms of assembly, part of the 50S ribosomal subunit.

In terms of biological role, binds to the 23S rRNA. This chain is Large ribosomal subunit protein uL15, found in Ralstonia nicotianae (strain ATCC BAA-1114 / GMI1000) (Ralstonia solanacearum).